The sequence spans 485 residues: NADH-quinone oxidoreductase subunit N (485 aa).

14 helical membrane-spanning segments follow: residues 8–28, 35–55, 75–95, 105–125, 127–147, 159–179, 203–223, 235–255, 271–291, 297–317, 326–346, 374–394, 408–430, and 455–475; these read LIAL…MLSI, FLNA…LWFV, LYTG…YPWL, FYLL…ANHL, ALFL…GYAF, YTIL…LVYA, LLAG…LVPF, PAPV…GVVM, VVLG…ALSQ, LLGY…IALQ, VGVY…VVSL, AVMT…GFIG, WWLV…RVAV, and IVVL…QPLI.

Belongs to the complex I subunit 2 family. As to quaternary structure, NDH-1 is composed of 13 different subunits. Subunits NuoA, H, J, K, L, M, N constitute the membrane sector of the complex.

It is found in the cell inner membrane. The enzyme catalyses a quinone + NADH + 5 H(+)(in) = a quinol + NAD(+) + 4 H(+)(out). Functionally, NDH-1 shuttles electrons from NADH, via FMN and iron-sulfur (Fe-S) centers, to quinones in the respiratory chain. The immediate electron acceptor for the enzyme in this species is believed to be ubiquinone. Couples the redox reaction to proton translocation (for every two electrons transferred, four hydrogen ions are translocated across the cytoplasmic membrane), and thus conserves the redox energy in a proton gradient. In Klebsiella pneumoniae (strain 342), this protein is NADH-quinone oxidoreductase subunit N.